Here is a 656-residue protein sequence, read N- to C-terminus: Putative cysteine-rich receptor-like protein kinase 32 (656 aa).

The N-terminal stretch at 1-23 is a signal peptide; the sequence is MCLQNLLSILCFVLAISFGYVSA. Gnk2-homologous domains follow at residues 24 to 126 and 134 to 238; these read QKCV…NSSF and PTMV…GSEY. At 24–262 the chain is on the extracellular side; sequence QKCVDSMFFR…PDGKTISTGA (239 aa). Residues Asn35, Asn52, Asn61, Asn103, and Asn123 are each glycosylated (N-linked (GlcNAc...) asparagine). A helical membrane pass occupies residues 263-283; that stretch reads IVAVVVSVVIFVVLLALVLVI. Topologically, residues 284 to 656 are cytoplasmic; that stretch reads RKRRQSYKTL…SASITRVTPR (373 aa). The Protein kinase domain occupies 321-606; the sequence is FSRNNKLGKG…IFQMLTNSSI (286 aa). Residues 327–335 and Lys349 contribute to the ATP site; that span reads LGKGGFGEV. Tyr394 is subject to Phosphotyrosine. Catalysis depends on Asp454, which acts as the Proton acceptor. Position 458 is a phosphoserine (Ser458). Phosphothreonine is present on Thr494. A Phosphotyrosine modification is found at Tyr502.

It belongs to the protein kinase superfamily. Ser/Thr protein kinase family. CRK subfamily.

The protein resides in the membrane. The catalysed reaction is L-seryl-[protein] + ATP = O-phospho-L-seryl-[protein] + ADP + H(+). The enzyme catalyses L-threonyl-[protein] + ATP = O-phospho-L-threonyl-[protein] + ADP + H(+). This is Putative cysteine-rich receptor-like protein kinase 32 (CRK32) from Arabidopsis thaliana (Mouse-ear cress).